Here is a 153-residue protein sequence, read N- to C-terminus: Endoribonuclease YbeY (153 aa).

Zn(2+) contacts are provided by H114, H118, and H124.

The protein belongs to the endoribonuclease YbeY family. Requires Zn(2+) as cofactor.

It is found in the cytoplasm. In terms of biological role, single strand-specific metallo-endoribonuclease involved in late-stage 70S ribosome quality control and in maturation of the 3' terminus of the 16S rRNA. The polypeptide is Endoribonuclease YbeY (Shewanella baltica (strain OS185)).